A 228-amino-acid polypeptide reads, in one-letter code: LHFPL tetraspan subfamily member 2 protein (228 aa).

4 helical membrane-spanning segments follow: residues 11-31, 102-122, 132-152, and 181-201; these read MLWT…FMSA, IFLA…VFTM, IFNV…LGLI, and LGWA…CAVF.

The protein belongs to the LHFP family. Expressed in all tissues and cell lines examined except brain and peripheral blood leukocytes.

The protein resides in the membrane. Functionally, plays a role in female and male fertility. Involved in distal reproductive tract development. This is LHFPL tetraspan subfamily member 2 protein from Homo sapiens (Human).